The primary structure comprises 129 residues: NADH-quinone oxidoreductase subunit A (129 aa).

A run of 3 helical transmembrane segments spans residues 14–34 (LAIH…VAAW), 67–87 (FLIA…FAWA), and 95–115 (WLGL…LVYL).

It belongs to the complex I subunit 3 family. As to quaternary structure, NDH-1 is composed of 14 different subunits. Subunits NuoA, H, J, K, L, M, N constitute the membrane sector of the complex.

It is found in the cell inner membrane. The enzyme catalyses a quinone + NADH + 5 H(+)(in) = a quinol + NAD(+) + 4 H(+)(out). Its function is as follows. NDH-1 shuttles electrons from NADH, via FMN and iron-sulfur (Fe-S) centers, to quinones in the respiratory chain. The immediate electron acceptor for the enzyme in this species is believed to be ubiquinone. Couples the redox reaction to proton translocation (for every two electrons transferred, four hydrogen ions are translocated across the cytoplasmic membrane), and thus conserves the redox energy in a proton gradient. In Rhodopseudomonas palustris (strain ATCC BAA-98 / CGA009), this protein is NADH-quinone oxidoreductase subunit A.